A 208-amino-acid polypeptide reads, in one-letter code: Mediator of RNA polymerase II transcription subunit 18 (208 aa).

Position 66 is a phosphoserine (Ser-66).

This sequence belongs to the Mediator complex subunit 18 family. As to quaternary structure, component of the Mediator complex, which is composed of MED1, MED4, MED6, MED7, MED8, MED9, MED10, MED11, MED12, MED13, MED13L, MED14, MED15, MED16, MED17, MED18, MED19, MED20, MED21, MED22, MED23, MED24, MED25, MED26, MED27, MED29, MED30, MED31, CCNC, CDK8 and CDC2L6/CDK11. The MED12, MED13, CCNC and CDK8 subunits form a distinct module termed the CDK8 module. Mediator containing the CDK8 module is less active than Mediator lacking this module in supporting transcriptional activation. Individual preparations of the Mediator complex lacking one or more distinct subunits have been variously termed ARC, CRSP, DRIP, PC2, SMCC and TRAP.

The protein resides in the nucleus. Component of the Mediator complex, a coactivator involved in the regulated transcription of nearly all RNA polymerase II-dependent genes. Mediator functions as a bridge to convey information from gene-specific regulatory proteins to the basal RNA polymerase II transcription machinery. Mediator is recruited to promoters by direct interactions with regulatory proteins and serves as a scaffold for the assembly of a functional preinitiation complex with RNA polymerase II and the general transcription factors. This is Mediator of RNA polymerase II transcription subunit 18 (Med18) from Mus musculus (Mouse).